We begin with the raw amino-acid sequence, 249 residues long: Adapter protein MecA (249 aa).

Belongs to the MecA family. As to quaternary structure, homodimer.

In terms of biological role, enables the recognition and targeting of unfolded and aggregated proteins to the ClpC protease or to other proteins involved in proteolysis. The polypeptide is Adapter protein MecA (Streptococcus thermophilus (strain CNRZ 1066)).